The primary structure comprises 484 residues: BAHD acyltransferase DCR (484 aa).

His168 acts as the Proton acceptor in catalysis. The interval 211 to 233 (LDLTAPKDPNETSNGEDAANPTV) is disordered. Catalysis depends on Asp394, which acts as the Proton acceptor. The segment at 452 to 484 (EEEEDDGKKLTNGNGHVNGNGNGYVNGNGNGFV) is disordered. A compositionally biased stretch (gly residues) spans 467 to 484 (HVNGNGNGYVNGNGNGFV).

The protein belongs to the plant acyltransferase family. As to expression, expressed in root caps and lateral root emerging sites, in trichomes, in epidermis in stems, sepals and anther filaments, and in pollen grains and torpedo stage seeds.

Its subcellular location is the cytoplasm. It localises to the cytosol. Its function is as follows. Required for incorporation of 9(10),16-dihydroxy-hexadecanoic acid into cutin. In Arabidopsis thaliana (Mouse-ear cress), this protein is BAHD acyltransferase DCR (DCR).